Reading from the N-terminus, the 1641-residue chain is Maestro heat-like repeat-containing protein family member 1 (1641 aa).

HEAT repeat units lie at residues 3 to 41 (ESSM…ARPV), 159 to 198 (VPFL…GALE), 344 to 382 (CSSP…SAAA), 385 to 423 (EDKK…HGYL), 1048 to 1086 (PDQL…ERGG), 1358 to 1396 (LMLL…GCPD), and 1605 to 1641 (QVDL…VKLA).

Belongs to the MROH1 family. Homooligomer; homooligomerizes at lysosome scission sites.

The protein localises to the lysosome membrane. Functionally, lysosome fission factor. Recruited to lysosomes by RAB7 (RAB7A or RAB7B) at scission sites and homooligomerizes to mediate the constriction and scission of lysosomal tubules. May sever membranes by inserting amphipathic helices into one bilayer leaflet. Lysosome fission is required to maintain their steady-state number, shape, size, composition and function, and to accomplish regeneration. The chain is Maestro heat-like repeat-containing protein family member 1 from Homo sapiens (Human).